The sequence spans 152 residues: Gamma-glutamylaminecyclotransferase C (152 aa).

9–12 (YGSL) contributes to the substrate binding site. The Proton acceptor role is filled by glutamate 84.

The protein belongs to the gamma-glutamylcyclotransferase family.

The enzyme catalyses epsilon-(gamma-L-glutamyl)-L-lysine = 5-oxo-L-proline + L-lysine. Its function is as follows. May contribute to degradation of proteins cross-linked by transglutaminases by degrading the cross-link between a lysine and a glutamic acid residue. Catalyzes the formation of 5-oxo-L-proline from L-gamma-glutamyl-L-epsilon-lysine. In Danio rerio (Zebrafish), this protein is Gamma-glutamylaminecyclotransferase C (ggact.3).